A 386-amino-acid chain; its full sequence is Bifunctional enzyme IspD/IspF (386 aa).

The 2-C-methyl-D-erythritol 4-phosphate cytidylyltransferase stretch occupies residues 1–225 (MYNFVTLSIL…SCLSAPSSDT (225 aa)). A 2-C-methyl-D-erythritol 2,4-cyclodiphosphate synthase region spans residues 226–386 (LSGVGFDVHA…NLKYFDWTKI (161 aa)). A divalent metal cation contacts are provided by aspartate 232 and histidine 234. Residues 232-234 (DVH) and 258-259 (HS) contribute to the 4-CDP-2-C-methyl-D-erythritol 2-phosphate site. Residue histidine 266 coordinates a divalent metal cation. Residues 280–282 (DIG), 285–289 (FPDND), 356–359 (TTTE), phenylalanine 363, and arginine 366 each bind 4-CDP-2-C-methyl-D-erythritol 2-phosphate.

It in the N-terminal section; belongs to the IspD/TarI cytidylyltransferase family. IspD subfamily. This sequence in the C-terminal section; belongs to the IspF family. The cofactor is a divalent metal cation.

It carries out the reaction 2-C-methyl-D-erythritol 4-phosphate + CTP + H(+) = 4-CDP-2-C-methyl-D-erythritol + diphosphate. The catalysed reaction is 4-CDP-2-C-methyl-D-erythritol 2-phosphate = 2-C-methyl-D-erythritol 2,4-cyclic diphosphate + CMP. It participates in isoprenoid biosynthesis; isopentenyl diphosphate biosynthesis via DXP pathway; isopentenyl diphosphate from 1-deoxy-D-xylulose 5-phosphate: step 2/6. Its pathway is isoprenoid biosynthesis; isopentenyl diphosphate biosynthesis via DXP pathway; isopentenyl diphosphate from 1-deoxy-D-xylulose 5-phosphate: step 4/6. Its function is as follows. Bifunctional enzyme that catalyzes the formation of 4-diphosphocytidyl-2-C-methyl-D-erythritol from CTP and 2-C-methyl-D-erythritol 4-phosphate (MEP) (IspD), and catalyzes the conversion of 4-diphosphocytidyl-2-C-methyl-D-erythritol 2-phosphate (CDP-ME2P) to 2-C-methyl-D-erythritol 2,4-cyclodiphosphate (ME-CPP) with a corresponding release of cytidine 5-monophosphate (CMP) (IspF). The protein is Bifunctional enzyme IspD/IspF of Sulfurimonas denitrificans (strain ATCC 33889 / DSM 1251) (Thiomicrospira denitrificans (strain ATCC 33889 / DSM 1251)).